An 85-amino-acid polypeptide reads, in one-letter code: Kappa-theraphotoxin-Gr1a (85 aa).

Positions 1 to 21 (MKTSVFAAILGLALFAVLCSG) are cleaved as a signal peptide. Positions 22 to 49 (SELQEKDLKETLLSAIMETALEAQPEER) are excised as a propeptide. Intrachain disulfides connect Cys-51/Cys-65, Cys-58/Cys-70, and Cys-64/Cys-77. An involved in active face region spans residues 53–55 (YLF).

The protein belongs to the neurotoxin 10 (Hwtx-1) family. 09 (HaTx) subfamily. In terms of tissue distribution, expressed by the venom gland.

The protein localises to the secreted. Functionally, inhibits Kv2.1/KCNB1 and Kv4.2/KCND2 voltage-gated potassium channels. Acts as a gating modifier by shifting channel openings to more depolarized voltages and acts via the occupancy of multiple binding sites on the channel. The toxin binding sites are situated on the S3-S4 extracellular linker of the channel. At least two hanatoxin molecules can occupy the Kv2.1/KCNB1 channel, and maybe more (three or four). Can also inhibit calcium channels (Cav2.1/CACNA1A). Needs to partition into the membrane in order to bind to the channel. The protein is Kappa-theraphotoxin-Gr1a of Grammostola rosea (Chilean rose tarantula).